A 171-amino-acid polypeptide reads, in one-letter code: Co-chaperone protein HscB homolog (171 aa).

Residues 2–74 enclose the J domain; the sequence is NHFELFGLPN…VTRAEYILSE (73 aa).

It belongs to the HscB family. Interacts with HscA and stimulates its ATPase activity.

Its function is as follows. Co-chaperone involved in the maturation of iron-sulfur cluster-containing proteins. Seems to help targeting proteins to be folded toward HscA. The sequence is that of Co-chaperone protein HscB homolog from Aliivibrio salmonicida (strain LFI1238) (Vibrio salmonicida (strain LFI1238)).